Reading from the N-terminus, the 427-residue chain is 3-phosphoshikimate 1-carboxyvinyltransferase (427 aa).

The 3-phosphoshikimate site is built by lysine 22, serine 23, and arginine 27. Residue lysine 22 coordinates phosphoenolpyruvate. The phosphoenolpyruvate site is built by glycine 96 and arginine 124. 3-phosphoshikimate-binding residues include serine 169, serine 170, glutamine 171, serine 197, aspartate 313, asparagine 336, and lysine 340. Glutamine 171 contributes to the phosphoenolpyruvate binding site. Aspartate 313 acts as the Proton acceptor in catalysis. Phosphoenolpyruvate contacts are provided by arginine 344, arginine 386, and lysine 411.

This sequence belongs to the EPSP synthase family. In terms of assembly, monomer.

The protein resides in the cytoplasm. The enzyme catalyses 3-phosphoshikimate + phosphoenolpyruvate = 5-O-(1-carboxyvinyl)-3-phosphoshikimate + phosphate. It participates in metabolic intermediate biosynthesis; chorismate biosynthesis; chorismate from D-erythrose 4-phosphate and phosphoenolpyruvate: step 6/7. Functionally, catalyzes the transfer of the enolpyruvyl moiety of phosphoenolpyruvate (PEP) to the 5-hydroxyl of shikimate-3-phosphate (S3P) to produce enolpyruvyl shikimate-3-phosphate and inorganic phosphate. The protein is 3-phosphoshikimate 1-carboxyvinyltransferase of Salmonella typhi.